The primary structure comprises 73 residues: MNLGLAIFLIIIALLIGLVGGFYGARAYMKKYFQDNPPISEDMIAAMMAQMGQKPSAKKLNQVMNMMKHQQQK.

A helical membrane pass occupies residues 3–23; the sequence is LGLAIFLIIIALLIGLVGGFY.

It belongs to the UPF0154 family.

It is found in the cell membrane. In Lactobacillus johnsonii (strain CNCM I-12250 / La1 / NCC 533), this protein is UPF0154 protein LJ_1506.